The primary structure comprises 170 residues: NADH-quinone oxidoreductase subunit B (170 aa).

Residues C37, C38, C102, and C131 each coordinate [4Fe-4S] cluster.

Belongs to the complex I 20 kDa subunit family. In terms of assembly, NDH-1 is composed of 14 different subunits. Subunits NuoB, C, D, E, F, and G constitute the peripheral sector of the complex. Requires [4Fe-4S] cluster as cofactor.

It localises to the cell inner membrane. The enzyme catalyses a quinone + NADH + 5 H(+)(in) = a quinol + NAD(+) + 4 H(+)(out). Functionally, NDH-1 shuttles electrons from NADH, via FMN and iron-sulfur (Fe-S) centers, to quinones in the respiratory chain. The immediate electron acceptor for the enzyme in this species is believed to be ubiquinone. Couples the redox reaction to proton translocation (for every two electrons transferred, four hydrogen ions are translocated across the cytoplasmic membrane), and thus conserves the redox energy in a proton gradient. This chain is NADH-quinone oxidoreductase subunit B, found in Geobacter sp. (strain M21).